A 686-amino-acid polypeptide reads, in one-letter code: tRNA (guanine(37)-N(1))-methyltransferase (686 aa).

Positions 206–244 (GGPSSVSLTEDTDGSEQPQGLPRAAAAPPPPSNKRRASY) are disordered. Residues His-428, 466-467 (DL), 495-496 (DG), and Asn-530 contribute to the S-adenosyl-L-methionine site.

This sequence belongs to the class I-like SAM-binding methyltransferase superfamily. TRM5/TYW2 family. As to quaternary structure, monomer.

It localises to the mitochondrion matrix. The protein resides in the nucleus. It is found in the cytoplasm. The catalysed reaction is guanosine(37) in tRNA + S-adenosyl-L-methionine = N(1)-methylguanosine(37) in tRNA + S-adenosyl-L-homocysteine + H(+). Functionally, specifically methylates the N1 position of guanosine-37 in various cytoplasmic and mitochondrial tRNAs. Methylation is not dependent on the nature of the nucleoside 5' of the target nucleoside. This is the first step in the biosynthesis of wybutosine (yW), a modified base adjacent to the anticodon of tRNAs and required for accurate decoding. In Leishmania major, this protein is tRNA (guanine(37)-N(1))-methyltransferase.